Consider the following 853-residue polypeptide: Putative dipeptidyl aminopeptidase C14C4.15c (853 aa).

Positions 1–26 (MNAYEGDTLNNHGKSSTRQHWRKRSA) are disordered. Residues 1 to 65 (MNAYEGDTLN…AKKRRRKKHR (65 aa)) are Cytoplasmic-facing. A compositionally biased stretch (basic residues) spans 15–25 (SSTRQHWRKRS). The helical; Signal-anchor for type II membrane protein transmembrane segment at 66 to 86 (YIYLAVCLFFLASVLSCAIIF) threads the bilayer. The Lumenal segment spans residues 87 to 853 (RFYLHTNREN…SGHFHHALYC (767 aa)). 5 N-linked (GlcNAc...) asparagine glycosylation sites follow: N96, N102, N472, N483, and N613. Residues S719, D795, and H828 each act as charge relay system in the active site.

It belongs to the peptidase S9B family.

It localises to the vacuole membrane. This chain is Putative dipeptidyl aminopeptidase C14C4.15c, found in Schizosaccharomyces pombe (strain 972 / ATCC 24843) (Fission yeast).